We begin with the raw amino-acid sequence, 178 residues long: ATP synthase subunit delta (178 aa).

This sequence belongs to the ATPase delta chain family. As to quaternary structure, F-type ATPases have 2 components, F(1) - the catalytic core - and F(0) - the membrane proton channel. F(1) has five subunits: alpha(3), beta(3), gamma(1), delta(1), epsilon(1). F(0) has three main subunits: a(1), b(2) and c(10-14). The alpha and beta chains form an alternating ring which encloses part of the gamma chain. F(1) is attached to F(0) by a central stalk formed by the gamma and epsilon chains, while a peripheral stalk is formed by the delta and b chains.

It is found in the cell inner membrane. F(1)F(0) ATP synthase produces ATP from ADP in the presence of a proton or sodium gradient. F-type ATPases consist of two structural domains, F(1) containing the extramembraneous catalytic core and F(0) containing the membrane proton channel, linked together by a central stalk and a peripheral stalk. During catalysis, ATP synthesis in the catalytic domain of F(1) is coupled via a rotary mechanism of the central stalk subunits to proton translocation. Functionally, this protein is part of the stalk that links CF(0) to CF(1). It either transmits conformational changes from CF(0) to CF(1) or is implicated in proton conduction. The polypeptide is ATP synthase subunit delta (Cellvibrio japonicus (strain Ueda107) (Pseudomonas fluorescens subsp. cellulosa)).